A 43-amino-acid polypeptide reads, in one-letter code: Jararafibrase-3 (43 aa).

Residues 10-43 (MNGLYYKIFDELKAWKDAEMFCRKYKPGWHLASF) form the C-type lectin domain.

Belongs to the true venom lectin family. In terms of assembly, monomer. Expressed by the venom gland.

Its subcellular location is the secreted. Inhibited by 1,10-phenanthroline and EDTA. Functionally, may have both metalloproteinase and lectin activities. Induces local hemorrhage in the skin of rats. Degrades type-IV collagen, gelatin, laminin and fibronectin. Has hemagglutinating activity on red blood cells. This chain is Jararafibrase-3, found in Bothrops jararaca (Jararaca).